The primary structure comprises 96 residues: Co-chaperonin GroES (96 aa).

It belongs to the GroES chaperonin family. Heptamer of 7 subunits arranged in a ring. Interacts with the chaperonin GroEL.

It localises to the cytoplasm. Its function is as follows. Together with the chaperonin GroEL, plays an essential role in assisting protein folding. The GroEL-GroES system forms a nano-cage that allows encapsulation of the non-native substrate proteins and provides a physical environment optimized to promote and accelerate protein folding. GroES binds to the apical surface of the GroEL ring, thereby capping the opening of the GroEL channel. The protein is Co-chaperonin GroES of Buchnera aphidicola subsp. Schizaphis graminum (strain Sg).